Consider the following 502-residue polypeptide: NAD(P)H-quinone oxidoreductase chain 4, chloroplastic (502 aa).

14 helical membrane passes run 4–24 (FPWL…IFFF), 37–57 (ICIC…HFQL), 87–107 (VGPI…AWPV), 113–130 (LFHF…GLFS), 134–154 (LLLF…LLSM), 167–187 (FILY…GMGL), 208–228 (ALEI…LPII), 242–262 (HYST…YGLV), 272–292 (AHSI…IYAA), 305–325 (IAYS…SITD), 330–350 (GAIL…FLAG), 374–396 (IFTM…GFAA), 416–436 (ILIT…SLSM), and 464–484 (LFVS…PDFV).

The protein belongs to the complex I subunit 4 family.

The protein resides in the plastid. The protein localises to the chloroplast thylakoid membrane. The catalysed reaction is a plastoquinone + NADH + (n+1) H(+)(in) = a plastoquinol + NAD(+) + n H(+)(out). It catalyses the reaction a plastoquinone + NADPH + (n+1) H(+)(in) = a plastoquinol + NADP(+) + n H(+)(out). The polypeptide is NAD(P)H-quinone oxidoreductase chain 4, chloroplastic (Ranunculus macranthus (Large buttercup)).